We begin with the raw amino-acid sequence, 570 residues long: Hydroxylamine reductase (570 aa).

[4Fe-4S] cluster contacts are provided by Cys-5, Cys-8, Cys-17, and Cys-23. Hybrid [4Fe-2O-2S] cluster-binding residues include His-266, Glu-290, Cys-334, Cys-425, Cys-453, Cys-478, Glu-513, and Lys-515. Position 425 is a cysteine persulfide (Cys-425).

Belongs to the HCP family. [4Fe-4S] cluster is required as a cofactor. Requires hybrid [4Fe-2O-2S] cluster as cofactor.

The protein localises to the cytoplasm. The enzyme catalyses A + NH4(+) + H2O = hydroxylamine + AH2 + H(+). In terms of biological role, catalyzes the reduction of hydroxylamine to form NH(3) and H(2)O. This chain is Hydroxylamine reductase, found in Clostridium botulinum (strain Loch Maree / Type A3).